We begin with the raw amino-acid sequence, 492 residues long: MISLSGLTSSVESDLDMQQAMLTNKDEKVLKALERTRQLDIPDEKTMPVLMKLLEEAGGNWSYIKLDNYTALVDAIYSVEDENKQSEGSSNGNRGKNLKVIDSPATLKKTYETRSASSGSSIQVVQKQPQLSNGDRKRKYKSRIADITKGSESVKIPLVDDVGSEAVPKFTYIPHNIVYQSAYLHVSLARISDEDCCANCKGNCLSADFPCTCARETSGEYAYTKEGLLKEKFLDTCLKMKKEPDSFPKVYCKDCPLERDHDKGTYGKCDGHLIRKFIKECWRKCGCDMQCGNRVVQRGIRCQLQVYFTQEGKGWGLRTLQDLPKGTFICEYIGEILTNTELYDRNVRSSSERHTYPVTLDADWGSEKDLKDEEALCLDATICGNVARFINHRCEDANMIDIPIEIETPDRHYYHIAFFTLRDVKAMDELTWDYMIDFNDKSHPVKAFRCCCGSESCRDRKIKGSQGKSIERRKIVSAKKQQGSKEVSKKRK.

The segment at Glu112–Arg138 is disordered. The span at Thr113–Asn133 shows a compositional bias: polar residues. Residues Cys196, Cys197, Cys200, Cys204, Cys213, Cys281, Cys285, Cys287, and Cys291 each contribute to the Zn(2+) site. The Pre-SET domain maps to Cys196–Gly299. One can recognise an SET domain in the interval Cys302–Met435. S-adenosyl-L-methionine is bound by residues Lys313 to Trp315 and Asn391 to His392. Residue Cys394 participates in Zn(2+) binding. Tyr434 contributes to the S-adenosyl-L-methionine binding site. The Post-SET domain maps to Lys446 to Ile462. Zn(2+)-binding residues include Cys450, Cys452, and Cys457. A disordered region spans residues Lys463–Lys492.

The protein belongs to the class V-like SAM-binding methyltransferase superfamily. Histone-lysine methyltransferase family. As to quaternary structure, interacts with ubiquitin.

Its subcellular location is the nucleus. The protein localises to the chromosome. The enzyme catalyses N(6)-methyl-L-lysyl(9)-[histone H3] + S-adenosyl-L-methionine = N(6),N(6)-dimethyl-L-lysyl(9)-[histone H3] + S-adenosyl-L-homocysteine + H(+). It carries out the reaction N(6),N(6)-dimethyl-L-lysyl(9)-[histone H3] + S-adenosyl-L-methionine = N(6),N(6),N(6)-trimethyl-L-lysyl(9)-[histone H3] + S-adenosyl-L-homocysteine + H(+). Its function is as follows. Histone methyltransferase that converts monomethylated 'Lys-9' of histone H3 (H3K9me1) to dimethylated 'Lys-9' (H3K9me2) in the absence of bound ubiquitin, and to trimethylated 'Lys-9' (H3K9me3) in the presence of bound ubiquitin. Acts in a locus-specific manner and contributes to the transcriptional silencing of pseudogenes and transposons. H3 'Lys-9' methylation represents a specific tag for epigenetic transcriptional repression. In Arabidopsis thaliana (Mouse-ear cress), this protein is Histone-lysine N-methyltransferase SUVR4 (SUVR4).